The sequence spans 228 residues: Translin (228 aa).

The segment at 86 to 90 is DNA/RNA binding; sequence RFHEH. The leucine-zipper stretch occupies residues 177 to 198; that stretch reads LDSGFRLLNLKNDSLRKRYDGL. N6-acetyllysine is present on Lys187. Phosphoserine is present on Ser190. Lys199 bears the N6-acetyllysine mark.

The protein belongs to the translin family. Ring-shaped heterooctamer of six TSN and two TSNAX subunits, DNA/RNA binding occurs inside the ring.

The protein localises to the cytoplasm. It localises to the nucleus. Its function is as follows. DNA-binding protein that specifically recognizes consensus sequences at the breakpoint junctions in chromosomal translocations, mostly involving immunoglobulin (Ig)/T-cell receptor gene segments. Seems to recognize single-stranded DNA ends generated by staggered breaks occurring at recombination hot spots. In terms of biological role, exhibits both single-stranded and double-stranded endoribonuclease activity. May act as an activator of RNA-induced silencing complex (RISC) by facilitating endonucleolytic cleavage of the siRNA passenger strand. The protein is Translin (TSN) of Cricetulus griseus (Chinese hamster).